The following is a 504-amino-acid chain: Glucose-6-phosphate isomerase (504 aa).

Glu333 acts as the Proton donor in catalysis. Residues His364 and Lys473 contribute to the active site.

The protein belongs to the GPI family.

The protein localises to the cytoplasm. It catalyses the reaction alpha-D-glucose 6-phosphate = beta-D-fructose 6-phosphate. It functions in the pathway carbohydrate biosynthesis; gluconeogenesis. The protein operates within carbohydrate degradation; glycolysis; D-glyceraldehyde 3-phosphate and glycerone phosphate from D-glucose: step 2/4. Its function is as follows. Catalyzes the reversible isomerization of glucose-6-phosphate to fructose-6-phosphate. The sequence is that of Glucose-6-phosphate isomerase from Stenotrophomonas maltophilia (strain K279a).